We begin with the raw amino-acid sequence, 158 residues long: SsrA-binding protein (158 aa).

This sequence belongs to the SmpB family.

It is found in the cytoplasm. Required for rescue of stalled ribosomes mediated by trans-translation. Binds to transfer-messenger RNA (tmRNA), required for stable association of tmRNA with ribosomes. tmRNA and SmpB together mimic tRNA shape, replacing the anticodon stem-loop with SmpB. tmRNA is encoded by the ssrA gene; the 2 termini fold to resemble tRNA(Ala) and it encodes a 'tag peptide', a short internal open reading frame. During trans-translation Ala-aminoacylated tmRNA acts like a tRNA, entering the A-site of stalled ribosomes, displacing the stalled mRNA. The ribosome then switches to translate the ORF on the tmRNA; the nascent peptide is terminated with the 'tag peptide' encoded by the tmRNA and targeted for degradation. The ribosome is freed to recommence translation, which seems to be the essential function of trans-translation. The polypeptide is SsrA-binding protein (Symbiobacterium thermophilum (strain DSM 24528 / JCM 14929 / IAM 14863 / T)).